Consider the following 100-residue polypeptide: MRLTPHEQDRLLISYAADLARRRRARGLRLNHPEAVAVITDHLLEGARDGRTVAELMVSGRDVLGRDDVMEGVPEMLHDVQVEATFPDGTKLVTVHHPIP.

This sequence belongs to the urease gamma subunit family. Heterotrimer of UreA (gamma), UreB (beta) and UreC (alpha) subunits. Three heterotrimers associate to form the active enzyme.

It is found in the cytoplasm. The catalysed reaction is urea + 2 H2O + H(+) = hydrogencarbonate + 2 NH4(+). It functions in the pathway nitrogen metabolism; urea degradation; CO(2) and NH(3) from urea (urease route): step 1/1. The chain is Urease subunit gamma from Mycobacterium sp. (strain JLS).